Here is a 102-residue protein sequence, read N- to C-terminus: Small ribosomal subunit protein uS10 (102 aa).

It belongs to the universal ribosomal protein uS10 family. Part of the 30S ribosomal subunit.

In terms of biological role, involved in the binding of tRNA to the ribosomes. This Gluconacetobacter diazotrophicus (strain ATCC 49037 / DSM 5601 / CCUG 37298 / CIP 103539 / LMG 7603 / PAl5) protein is Small ribosomal subunit protein uS10.